The chain runs to 226 residues: LexA repressor (226 aa).

Residues 42–62 constitute a DNA-binding region (H-T-H motif); sequence MREIGDAVGLASLSSVTHQLN. Residues Ser-150 and Lys-187 each act as for autocatalytic cleavage activity in the active site.

This sequence belongs to the peptidase S24 family. As to quaternary structure, homodimer.

It carries out the reaction Hydrolysis of Ala-|-Gly bond in repressor LexA.. In terms of biological role, represses a number of genes involved in the response to DNA damage (SOS response), including recA and lexA. In the presence of single-stranded DNA, RecA interacts with LexA causing an autocatalytic cleavage which disrupts the DNA-binding part of LexA, leading to derepression of the SOS regulon and eventually DNA repair. The sequence is that of LexA repressor from Clavibacter sepedonicus (Clavibacter michiganensis subsp. sepedonicus).